The sequence spans 379 residues: UDP-4-amino-4-deoxy-L-arabinose--oxoglutarate aminotransferase (379 aa).

K183 is modified (N6-(pyridoxal phosphate)lysine).

It belongs to the DegT/DnrJ/EryC1 family. ArnB subfamily. Homodimer. The cofactor is pyridoxal 5'-phosphate.

The enzyme catalyses UDP-4-amino-4-deoxy-beta-L-arabinose + 2-oxoglutarate = UDP-beta-L-threo-pentopyranos-4-ulose + L-glutamate. Its pathway is nucleotide-sugar biosynthesis; UDP-4-deoxy-4-formamido-beta-L-arabinose biosynthesis; UDP-4-deoxy-4-formamido-beta-L-arabinose from UDP-alpha-D-glucuronate: step 2/3. It functions in the pathway bacterial outer membrane biogenesis; lipopolysaccharide biosynthesis. Functionally, catalyzes the conversion of UDP-4-keto-arabinose (UDP-Ara4O) to UDP-4-amino-4-deoxy-L-arabinose (UDP-L-Ara4N). The modified arabinose is attached to lipid A and is required for resistance to polymyxin and cationic antimicrobial peptides. This is UDP-4-amino-4-deoxy-L-arabinose--oxoglutarate aminotransferase from Pseudomonas fluorescens (strain ATCC BAA-477 / NRRL B-23932 / Pf-5).